A 427-amino-acid polypeptide reads, in one-letter code: MNQTNLDFLATSDPALAAIIDRELQRQRTHIELIASENFTSAAVMAAQGSVLTNKYAEGLPGKRYYGGCEFVDQAETLAISRVKELFGAAHANVQPHSGAQANFAVFLTLLQPGDTIMGMDLSHGGHLTHGSPVNVSGKWFEVAHYGVEKETGRLDYDKIRQQALEVKPKLLICGYSAYPRQIEFDKFRAIADEVGAYLMADIAHIAGLVASGHHPSPLPYCDVVTTTTHKTLRGPRGGLIMTNNEELGKKFDKSVFPGTQGGPLEHVITAKAVAFGEALKPEFKVYSGQVIANAQAMADQLQKRGFDLVSGGTDNHLMLVDLRSIAMTGKVGDQLLGEINITANKNTVPFDPESPFVTSGLRLGSPAMTTRGMQEDEFRTIANIIADRLLSPEDEGVKADCLRRVSELCAGFPLYDHLRIPVAVIA.

(6S)-5,6,7,8-tetrahydrofolate-binding positions include Leu122 and 126–128; that span reads GHL. Lys231 is modified (N6-(pyridoxal phosphate)lysine). (6S)-5,6,7,8-tetrahydrofolate-binding positions include Glu247 and 355–357; that span reads SPF.

Belongs to the SHMT family. In terms of assembly, homodimer. Pyridoxal 5'-phosphate serves as cofactor.

The protein resides in the cytoplasm. It catalyses the reaction (6R)-5,10-methylene-5,6,7,8-tetrahydrofolate + glycine + H2O = (6S)-5,6,7,8-tetrahydrofolate + L-serine. Its pathway is one-carbon metabolism; tetrahydrofolate interconversion. It functions in the pathway amino-acid biosynthesis; glycine biosynthesis; glycine from L-serine: step 1/1. In terms of biological role, catalyzes the reversible interconversion of serine and glycine with tetrahydrofolate (THF) serving as the one-carbon carrier. This reaction serves as the major source of one-carbon groups required for the biosynthesis of purines, thymidylate, methionine, and other important biomolecules. Also exhibits THF-independent aldolase activity toward beta-hydroxyamino acids, producing glycine and aldehydes, via a retro-aldol mechanism. In Synechocystis sp. (strain ATCC 27184 / PCC 6803 / Kazusa), this protein is Serine hydroxymethyltransferase.